The following is a 233-amino-acid chain: Zein-alpha PMS2 (233 aa).

The N-terminal stretch at 1–21 (MAAKIFCFLMLLGLSASVATA) is a signal peptide.

It belongs to the zein family.

In terms of biological role, zeins are major seed storage proteins. In Zea mays (Maize), this protein is Zein-alpha PMS2 (ZMPMS2).